A 294-amino-acid chain; its full sequence is tRNA dimethylallyltransferase (294 aa).

10–17 (GPTAVGKT) contacts ATP. 12–17 (TAVGKT) is a binding site for substrate. An interaction with substrate tRNA region spans residues 35–38 (DSQQ).

Belongs to the IPP transferase family. In terms of assembly, monomer. Mg(2+) is required as a cofactor.

It carries out the reaction adenosine(37) in tRNA + dimethylallyl diphosphate = N(6)-dimethylallyladenosine(37) in tRNA + diphosphate. Catalyzes the transfer of a dimethylallyl group onto the adenine at position 37 in tRNAs that read codons beginning with uridine, leading to the formation of N6-(dimethylallyl)adenosine (i(6)A). The sequence is that of tRNA dimethylallyltransferase from Streptococcus suis (strain 98HAH33).